Here is a 422-residue protein sequence, read N- to C-terminus: UPF0761 membrane protein LHK_02978 (422 aa).

6 helical membrane passes run 44-64, 102-122, 141-161, 178-198, 212-232, and 246-266; these read LLSL…FPVF, LTAV…LTID, MLVY…GISG, LAGI…LTVL, ALIG…GFGL, and AFAT…TVLI.

This sequence belongs to the UPF0761 family.

It localises to the cell inner membrane. This is UPF0761 membrane protein LHK_02978 from Laribacter hongkongensis (strain HLHK9).